Here is a 431-residue protein sequence, read N- to C-terminus: Adenylosuccinate synthetase (431 aa).

GTP is bound by residues 12–18 (GDEGKGK) and 40–42 (GHT). Catalysis depends on Asp13, which acts as the Proton acceptor. The Mg(2+) site is built by Asp13 and Gly40. IMP contacts are provided by residues 13-16 (DEGK), 38-41 (NAGH), Thr129, Arg143, Gln224, Thr239, and Arg303. His41 serves as the catalytic Proton donor. 299–305 (VTTGRAR) serves as a coordination point for substrate. GTP is bound by residues Arg305, 331–333 (KLD), and 413–415 (GVG).

Belongs to the adenylosuccinate synthetase family. Homodimer. Requires Mg(2+) as cofactor.

It localises to the cytoplasm. It carries out the reaction IMP + L-aspartate + GTP = N(6)-(1,2-dicarboxyethyl)-AMP + GDP + phosphate + 2 H(+). It participates in purine metabolism; AMP biosynthesis via de novo pathway; AMP from IMP: step 1/2. Functionally, plays an important role in the de novo pathway of purine nucleotide biosynthesis. Catalyzes the first committed step in the biosynthesis of AMP from IMP. The sequence is that of Adenylosuccinate synthetase from Mycobacterium sp. (strain KMS).